Here is a 229-residue protein sequence, read N- to C-terminus: Protein MC132 (229 aa).

Interacts with host RELA (via RHD domain), ELOB, ELOC and CUL5; these interactions induce the proteasomal degradation of host RELA.

It is found in the host cytoplasm. Its function is as follows. Inhibits host NF-kappa-B activation stimulated by IL-1 and multiple PRR viral detection pathways. Targets host NF-kappa-B component RELA/p65 for ubiquitin-dependent proteasomal degradation. This is Protein MC132 (MC132) from Homo sapiens (Human).